The following is an 86-amino-acid chain: uncharacterized protein (86 aa).

2 helical membrane-spanning segments follow: residues 21–43 (VFWVGLVVYYGFVALCWIGEATA) and 53–75 (FWYASFLGTFLIPLFMSIIYFYF).

It is found in the cell membrane. This is an uncharacterized protein from Archaeoglobus fulgidus (strain ATCC 49558 / DSM 4304 / JCM 9628 / NBRC 100126 / VC-16).